Reading from the N-terminus, the 103-residue chain is MTLFLVIFFILFLLLCYFFSFKRTNKMEIGINPIKKIPWSDNEHIFVSSLFTNKDKYLTGPMRLTYRPDSKTAVLDFKGTNYTYYLDNFDDVRKLVPTLLLSK.

Residues 1 to 21 (MTLFLVIFFILFLLLCYFFSF) form a helical; Signal-anchor membrane-spanning segment. Topologically, residues 22-103 (KRTNKMEIGI…KLVPTLLLSK (82 aa)) are virion surface.

Belongs to the orthopoxvirus OPG086 family. As to quaternary structure, interacts with OPG099/L5. Component of the entry fusion complex (EFC) composed of OPG053, OPG076, OPG086, OPG094, OPG095, OPG099, OPG107, OPG143, OPG104, OPG147 and OPG155. Except for OPG095 and OPG053, each of the EFC proteins is required for assembly or stability of the complex. Post-translationally, unglycosylated because produced in viral factories instead of the classic ER -Golgi route.

It localises to the virion membrane. Functionally, component of the entry fusion complex (EFC), which consists of 11 proteins. During cell infection, this complex mediates entry of the virion core into the host cytoplasm by a two-step mechanism consisting of lipid mixing of the viral and cellular membranes and subsequent pore formation. This is Entry-fusion complex protein OPG086 (OPG086) from Vertebrata (FPV).